The sequence spans 429 residues: Adenylosuccinate synthetase (429 aa).

GTP-binding positions include 13–19 (GDEGKGK) and 41–43 (GHT). Catalysis depends on Asp-14, which acts as the Proton acceptor. Asp-14 and Gly-41 together coordinate Mg(2+). IMP contacts are provided by residues 14 to 17 (DEGK), 39 to 42 (NAGH), Thr-130, Arg-144, Gln-224, Thr-239, and Arg-303. The Proton donor role is filled by His-42. 299–305 (ATTGRAR) provides a ligand contact to substrate. GTP-binding positions include Arg-305, 331 to 333 (KLD), and 412 to 414 (STG).

It belongs to the adenylosuccinate synthetase family. As to quaternary structure, homodimer. The cofactor is Mg(2+).

It localises to the cytoplasm. It carries out the reaction IMP + L-aspartate + GTP = N(6)-(1,2-dicarboxyethyl)-AMP + GDP + phosphate + 2 H(+). Its pathway is purine metabolism; AMP biosynthesis via de novo pathway; AMP from IMP: step 1/2. In terms of biological role, plays an important role in the de novo pathway of purine nucleotide biosynthesis. Catalyzes the first committed step in the biosynthesis of AMP from IMP. The protein is Adenylosuccinate synthetase of Psychrobacter sp. (strain PRwf-1).